The chain runs to 472 residues: Relaxin-3 receptor 1 (472 aa).

At 1-81 (MQVASATPAA…ESTDTEARVR (81 aa)) the chain is on the extracellular side. N-linked (GlcNAc...) asparagine glycans are attached at residues N36 and N40. Residues 82 to 102 (ILISAVYWVVCALGLAGNLLV) form a helical membrane-spanning segment. The Cytoplasmic portion of the chain corresponds to 103–119 (LYLMKSKQGWRKSSINL). A helical transmembrane segment spans residues 120–140 (FVTNLALTDFQFVLTLPFWAV). The Extracellular portion of the chain corresponds to 141 to 156 (ENALDFKWPFGKAMCK). Residues C155 and C247 are joined by a disulfide bond. Residues 157–177 (IVSMVTSMNMYASVFFLTAMS) traverse the membrane as a helical segment. Topologically, residues 178-215 (VARYHSVASALKSHRTRGRGRGDCCGQSLRESCCFSAK) are cytoplasmic. The chain crosses the membrane as a helical span at residues 216-236 (VLCGLIWASAALASLPNAIFS). Topologically, residues 237-270 (TTIRVLGEELCLMHFPDKLLGWDRQFWLGLYHLQ) are extracellular. Residues 271 to 291 (KVLLGFLLPLSIISLCYLLLV) traverse the membrane as a helical segment. Residues 292–298 (RFISDRR) are Cytoplasmic-facing. A helical membrane pass occupies residues 299–319 (VVGTTDAVGAAAAPGGGLSTA). At 320-332 (SARRRSKVTKSVT) the chain is on the extracellular side. Residues 333 to 353 (IVVLSFFLCWLPNQALTTWSI) form a helical membrane-spanning segment. At 354 to 472 (LIKFNAVPFS…YDLLPSSSAY (119 aa)) the chain is on the cytoplasmic side.

The protein belongs to the G-protein coupled receptor 1 family.

It is found in the cell membrane. Receptor for RNL3/relaxin-3. Binding of the ligand inhibit cAMP accumulation. The protein is Relaxin-3 receptor 1 (Rxfp3) of Mus musculus (Mouse).